The following is a 417-amino-acid chain: Tumor necrosis factor receptor superfamily member 25 (417 aa).

Positions 1–24 (MEQRPRGCAAVAAALLLVLLGARA) are cleaved as a signal peptide. Topologically, residues 25–199 (QGGTRSPRCD…RCAAVCGWRQ (175 aa)) are extracellular. TNFR-Cys repeat units follow at residues 34 to 71 (DCAG…STCL), 72 to 115 (VCPQ…DTRC), 116 to 163 (GCKP…TDCG), and 164 to 192 (TCLP…ERCA). Intrachain disulfides connect cysteine 35–cysteine 47, cysteine 48–cysteine 61, cysteine 51–cysteine 70, cysteine 73–cysteine 89, cysteine 92–cysteine 107, cysteine 95–cysteine 115, cysteine 117–cysteine 130, cysteine 138–cysteine 155, cysteine 141–cysteine 162, cysteine 165–cysteine 176, cysteine 179–cysteine 191, and cysteine 187–cysteine 195. The N-linked (GlcNAc...) asparagine glycan is linked to asparagine 67. N-linked (GlcNAc...) asparagine glycosylation occurs at asparagine 106. The helical transmembrane segment at 200–220 (MFWVQVLLAGLVVPLLLGATL) threads the bilayer. At 221 to 417 (TYTYRHCWPH…DLRSRLQRGP (197 aa)) the chain is on the cytoplasmic side. Residues 332–413 (GPQLYDVMDA…GCVEDLRSRL (82 aa)) enclose the Death domain. A (Microbial infection) N-beta-linked (GlcNAc) arginine glycan is attached at arginine 352.

In terms of assembly, homodimer. Interacts strongly via the death domains with TNFRSF1 and TRADD to activate at least two distinct signaling cascades, apoptosis and NF-kappa-B signaling. Interacts with BAG4. (Microbial infection) Glycosylated at Arg-352 by enteropathogenic E.coli protein NleB1. Post-translationally, glycosylated. Abundantly expressed in thymocytes and lymphocytes. Detected in lymphocyte-rich tissues such as thymus, colon, intestine, and spleen. Also found in the prostate.

Its subcellular location is the cell membrane. The protein localises to the secreted. In terms of biological role, receptor for TNFSF12/APO3L/TWEAK. Interacts directly with the adapter TRADD. Mediates activation of NF-kappa-B and induces apoptosis. May play a role in regulating lymphocyte homeostasis. In Homo sapiens (Human), this protein is Tumor necrosis factor receptor superfamily member 25 (TNFRSF25).